The following is a 64-amino-acid chain: UPF0337 protein SAB0772 (64 aa).

Positions 1 to 40 (MADESKFEQAKGNVKETIGNVTDNKNLENEGKEDKASGKA) are disordered. Over residues 25–40 (KNLENEGKEDKASGKA) the composition is skewed to basic and acidic residues.

This sequence belongs to the UPF0337 (CsbD) family.

The protein is UPF0337 protein SAB0772 of Staphylococcus aureus (strain bovine RF122 / ET3-1).